A 510-amino-acid chain; its full sequence is Maturase K (510 aa).

This sequence belongs to the intron maturase 2 family. MatK subfamily.

Its subcellular location is the plastid. In terms of biological role, usually encoded in the trnK tRNA gene intron. Probably assists in splicing its own and other chloroplast group II introns. The protein is Maturase K of Aneura mirabilis (Parasitic liverwort).